The following is a 576-amino-acid chain: Septation ring formation regulator EzrA (576 aa).

Residues 1–7 (MSSTVII) lie on the Extracellular side of the membrane. A helical transmembrane segment spans residues 8-26 (LIVVLLVILVAFYAFAILM). Residues 27–576 (RKKTEDRILA…FKNKPTPDYL (550 aa)) lie on the Cytoplasmic side of the membrane. Coiled-coil stretches lie at residues 105 to 134 (RARE…VAQL), 254 to 305 (ENVN…FERE), and 356 to 402 (GYQE…IEKN).

Belongs to the EzrA family.

The protein localises to the cell membrane. Functionally, negative regulator of FtsZ ring formation; modulates the frequency and position of FtsZ ring formation. Inhibits FtsZ ring formation at polar sites. Interacts either with FtsZ or with one of its binding partners to promote depolymerization. In Lactococcus lactis subsp. cremoris (strain MG1363), this protein is Septation ring formation regulator EzrA.